The primary structure comprises 147 residues: MPGKKSPYGLFAGGKLKKKRQKFRWNDVTYKRRMLGLAEKYDPLEGAPMARGIVLEKVGVEARKPNAAVRKCVRVQLVKNGKVVTAFVPYDGGLNYINEHDEVIIERIGGPEGKSLGDIPGVRFKVVKVNGVSLWAIWRGKKQKPTR.

This sequence belongs to the universal ribosomal protein uS12 family. Part of the 30S ribosomal subunit.

Functionally, with S4 and S5 plays an important role in translational accuracy. Located at the interface of the 30S and 50S subunits. This Pyrobaculum calidifontis (strain DSM 21063 / JCM 11548 / VA1) protein is Small ribosomal subunit protein uS12.